The primary structure comprises 651 residues: Beta-glucuronidase (651 aa).

The N-terminal stretch at 1–22 is a signal peptide; that stretch reads MSRGPAGAWVALGPLLWTCGLA. Asn-172 and Asn-419 each carry an N-linked (GlcNAc...) asparagine glycan. The active-site Proton donor is the Glu-450. Asn-630 is a glycosylation site (N-linked (GlcNAc...) asparagine).

The protein belongs to the glycosyl hydrolase 2 family. Homotetramer.

The protein resides in the lysosome. It catalyses the reaction a beta-D-glucuronoside + H2O = D-glucuronate + an alcohol. Inhibited by L-aspartic acid. Plays an important role in the degradation of dermatan and keratan sulfates. The sequence is that of Beta-glucuronidase (GUSB) from Canis lupus familiaris (Dog).